The sequence spans 186 residues: ATP synthase subunit delta (186 aa).

It belongs to the ATPase delta chain family. As to quaternary structure, F-type ATPases have 2 components, F(1) - the catalytic core - and F(0) - the membrane proton channel. F(1) has five subunits: alpha(3), beta(3), gamma(1), delta(1), epsilon(1). CF(0) has four main subunits: a(1), b(1), b'(1) and c(10-14). The alpha and beta chains form an alternating ring which encloses part of the gamma chain. F(1) is attached to F(0) by a central stalk formed by the gamma and epsilon chains, while a peripheral stalk is formed by the delta, b and b' chains.

It is found in the cell inner membrane. Its function is as follows. F(1)F(0) ATP synthase produces ATP from ADP in the presence of a proton or sodium gradient. F-type ATPases consist of two structural domains, F(1) containing the extramembraneous catalytic core and F(0) containing the membrane proton channel, linked together by a central stalk and a peripheral stalk. During catalysis, ATP synthesis in the catalytic domain of F(1) is coupled via a rotary mechanism of the central stalk subunits to proton translocation. This protein is part of the stalk that links CF(0) to CF(1). It either transmits conformational changes from CF(0) to CF(1) or is implicated in proton conduction. The protein is ATP synthase subunit delta of Bradyrhizobium sp. (strain ORS 278).